We begin with the raw amino-acid sequence, 30 residues long: Cycloviolacin-O2 (30 aa).

The cyclopeptide (Gly-Asn) cross-link spans Gly1–Asn30. Cystine bridges form between Cys4/Cys20, Cys8/Cys22, and Cys13/Cys27.

Post-translationally, this is a cyclic peptide.

Its function is as follows. Probably participates in a plant defense mechanism. This Viola biflora (Yellow wood violet) protein is Cycloviolacin-O2.